A 164-amino-acid polypeptide reads, in one-letter code: Phosphopantetheine adenylyltransferase (164 aa).

Residue serine 9 participates in substrate binding. ATP is bound by residues 9-10 (SF) and histidine 17. Residues lysine 41, valine 78, and arginine 92 each contribute to the substrate site. Residues 93–95 (GLR), glutamate 103, and 128–134 (SRPITAT) contribute to the ATP site.

Belongs to the bacterial CoaD family. As to quaternary structure, homohexamer. Mg(2+) is required as a cofactor.

It is found in the cytoplasm. It catalyses the reaction (R)-4'-phosphopantetheine + ATP + H(+) = 3'-dephospho-CoA + diphosphate. It functions in the pathway cofactor biosynthesis; coenzyme A biosynthesis; CoA from (R)-pantothenate: step 4/5. In terms of biological role, reversibly transfers an adenylyl group from ATP to 4'-phosphopantetheine, yielding dephospho-CoA (dPCoA) and pyrophosphate. The sequence is that of Phosphopantetheine adenylyltransferase from Rhizobium etli (strain ATCC 51251 / DSM 11541 / JCM 21823 / NBRC 15573 / CFN 42).